A 250-amino-acid polypeptide reads, in one-letter code: Probable septum site-determining protein MinC (250 aa).

Positions 110 to 143 are disordered; the sequence is SGARERPLEPEPEVVKKPEPAPAPPPPPEPEVRP. Over residues 112-128 the composition is skewed to basic and acidic residues; that stretch reads ARERPLEPEPEVVKKPE. A compositionally biased stretch (pro residues) spans 129–138; the sequence is PAPAPPPPPE.

It belongs to the MinC family. As to quaternary structure, interacts with MinD and FtsZ.

Its function is as follows. Cell division inhibitor that blocks the formation of polar Z ring septums. Rapidly oscillates between the poles of the cell to destabilize FtsZ filaments that have formed before they mature into polar Z rings. Prevents FtsZ polymerization. The protein is Probable septum site-determining protein MinC of Pseudomonas putida (strain ATCC 47054 / DSM 6125 / CFBP 8728 / NCIMB 11950 / KT2440).